Consider the following 323-residue polypeptide: MAKDILIHQIIEVLERAGFMVSNQCNIRPRSFDLAARQGNTLLFCKVLYNIDGLNEETAREMKSLAKYLNGYPILIGAKTRDQLLEDSVVYMRYDIPALSIQTLYDYFVENVPPLVSAAPGGLYVSIDGDVLKEARMNVSMSLGALASELGVSRRTISKYEEGQMDASIDIVLHLEEILDMALAKSIDILRSFEKELDPANVKEEAHEMKTPPNDNILNLIYTLGYDVLSTNQAPFKAVSKDTSSTFLTGVSEYSNAMVKRAHLMSSISNVIETQSVFIIEGKSRYKFVEDTVLIERDELNTIADSDDLDTLIHERAKRHKEE.

Residues 132-190 (LKEARMNVSMSLGALASELGVSRRTISKYEEGQMDASIDIVLHLEEILDMALAKSIDIL) form the HTH cro/C1-type domain. The segment at residues 143 to 162 (LGALASELGVSRRTISKYEE) is a DNA-binding region (H-T-H motif).

The sequence is that of Putative HTH-type transcriptional regulatory protein Mbur_1811 from Methanococcoides burtonii (strain DSM 6242 / NBRC 107633 / OCM 468 / ACE-M).